The following is a 338-amino-acid chain: Protein UL141 (338 aa).

An N-terminal signal peptide occupies residues 1-25; sequence MCRRESLRTLPWLFWVLLSCPRLLE. The Extracellular portion of the chain corresponds to 37–278; it reads DIAEKMWAEN…DTGMSPWATR (242 aa). N-linked (GlcNAc...) asparagine; by host glycosylation is found at Asn117, Asn132, and Asn147. The helical transmembrane segment at 279-299 threads the bilayer; that stretch reads GIAAFLGFWSIFTVCFLCYLC. Topologically, residues 300–338 are cytoplasmic; the sequence is YLQCCGHWCPTPGRGRRGGEGYRRLPTYDSYPGVKKMKR.

In terms of assembly, interacts with human PVR. Interacts with human TNFRSF10A and TNFRSF10B. Forms a homodimer that engages two TNFRSF10B monomers.

Its subcellular location is the host endoplasmic reticulum membrane. Evasion of NK cell killing. Blocks surface expression of PVR which is a ligand for NK cell-activating receptors. Binds human PVR in the endoplasmic reticulum and prevents its maturation and transport to the cell surface. Targets also the natural killer cell activating ligand NECTIN2 for proteasome-mediated degradation. Additionally promotes intracellular retention of TNFRSF10A/TRAIL-R1 and TNFRSF10B/TRAIL-R2 and thus down-regulates their cell surface expression. This is Protein UL141 (UL141) from Human cytomegalovirus (strain Merlin) (HHV-5).